Consider the following 313-residue polypeptide: Ribosomal RNA small subunit methyltransferase H (313 aa).

S-adenosyl-L-methionine contacts are provided by residues 35-37 (GGH), aspartate 55, phenylalanine 79, aspartate 101, and glutamine 108.

The protein belongs to the methyltransferase superfamily. RsmH family.

The protein localises to the cytoplasm. It catalyses the reaction cytidine(1402) in 16S rRNA + S-adenosyl-L-methionine = N(4)-methylcytidine(1402) in 16S rRNA + S-adenosyl-L-homocysteine + H(+). Functionally, specifically methylates the N4 position of cytidine in position 1402 (C1402) of 16S rRNA. The polypeptide is Ribosomal RNA small subunit methyltransferase H (Salmonella arizonae (strain ATCC BAA-731 / CDC346-86 / RSK2980)).